A 375-amino-acid chain; its full sequence is Serpin B5 (375 aa).

5 N-linked (GlcNAc...) asparagine glycosylation sites follow: N99, N133, N155, N188, and N361.

Belongs to the serpin family. Ov-serpin subfamily. In terms of assembly, interacts with IRF6.

Its subcellular location is the secreted. It localises to the extracellular space. In terms of biological role, tumor suppressor. It blocks the growth, invasion, and metastatic properties of mammary tumors. As it does not undergo the S (stressed) to R (relaxed) conformational transition characteristic of active serpins, it exhibits no serine protease inhibitory activity. This chain is Serpin B5 (SERPINB5), found in Plecturocebus moloch (Dusky titi monkey).